The sequence spans 496 residues: METYILSLDQGTTSSRAILFNKEGKIVHSAQKEFTQYFPHPGWVEHNANEIWGSVLAVIASVISESGISASQIAGIGITNQRETTVVWDKDTGSPVYNAIVWQSRQTSGICEELREKGYNDKFREKTGLLIDPYFSGTKVKWILDNVEGAREKAEKGELLFGTIDTWLIWKMSGGKAHVTDYSNASRTLMFNIYDLKWDDELLDILGVPKSMLPEVKPSSHVYAETVDYHFFGKNIPIAGAAGDQQSALFGQACFEEGMGKNTYGTGCFMLMNTGEKAIKSEHGLLTTIAWGIDGKVNYALEGSIFVAGSAIQWLRDGLRMFQDSSLSESYAEKVDSTDGVYVVPAFVGLGTPYWDSDVRGSVFGLTRGTTKEHFIRATLESLAYQTKDVLDAMEADSNISLKTLRVDGGAVKNNFLMQFQGDLLNVPVERPEINETTALGAAYLAGIAVGFWKDRSEIANQWNLDKRFEPELEEEKRNELYKGWQKAVKAAMAFK.

Thr-12 lines the ADP pocket. Positions 12, 13, and 14 each coordinate ATP. Residue Thr-12 coordinates sn-glycerol 3-phosphate. Position 16 (Arg-16) interacts with ADP. Arg-82, Glu-83, and Tyr-134 together coordinate sn-glycerol 3-phosphate. Residues Arg-82, Glu-83, and Tyr-134 each coordinate glycerol. His-230 carries the phosphohistidine; by HPr modification. Asp-244 contributes to the sn-glycerol 3-phosphate binding site. Glycerol-binding residues include Asp-244 and Gln-245. Thr-266 and Gly-309 together coordinate ADP. Thr-266, Gly-309, Gln-313, and Gly-410 together coordinate ATP. ADP is bound by residues Gly-410 and Asn-414.

It belongs to the FGGY kinase family. In terms of assembly, homotetramer and homodimer (in equilibrium). In terms of processing, the phosphoenolpyruvate-dependent sugar phosphotransferase system (PTS), including enzyme I, and histidine-containing protein (HPr) are required for the phosphorylation, which leads to the activation of the enzyme.

It catalyses the reaction glycerol + ATP = sn-glycerol 3-phosphate + ADP + H(+). It participates in polyol metabolism; glycerol degradation via glycerol kinase pathway; sn-glycerol 3-phosphate from glycerol: step 1/1. Activated by phosphorylation and inhibited by fructose 1,6-bisphosphate (FBP). Its function is as follows. Key enzyme in the regulation of glycerol uptake and metabolism. Catalyzes the phosphorylation of glycerol to yield sn-glycerol 3-phosphate. The sequence is that of Glycerol kinase from Bacillus subtilis (strain 168).